Consider the following 501-residue polypeptide: Putative ribose/galactose/methyl galactoside import ATP-binding protein 1 (501 aa).

ABC transporter domains are found at residues 5-237 (VSLS…VGRQ) and 249-492 (VPGE…MTRS). 37–44 (GENGAGKS) provides a ligand contact to ATP.

Belongs to the ABC transporter superfamily. Carbohydrate importer 2 (CUT2) (TC 3.A.1.2) family.

The protein localises to the cell inner membrane. The catalysed reaction is D-ribose(out) + ATP + H2O = D-ribose(in) + ADP + phosphate + H(+). It carries out the reaction D-galactose(out) + ATP + H2O = D-galactose(in) + ADP + phosphate + H(+). Part of an ABC transporter complex involved in carbohydrate import. Could be involved in ribose, galactose and/or methyl galactoside import. Responsible for energy coupling to the transport system. The sequence is that of Putative ribose/galactose/methyl galactoside import ATP-binding protein 1 from Rhizobium meliloti (strain 1021) (Ensifer meliloti).